Here is a 224-residue protein sequence, read N- to C-terminus: Octanoyltransferase (224 aa).

A BPL/LPL catalytic domain is found at Gly-33–Ala-213. The interval Gly-51 to Arg-71 is disordered. Substrate is bound by residues Arg-71–His-78, Ala-143–Gly-145, and Gly-156–Ala-158. Residue Cys-174 is the Acyl-thioester intermediate of the active site.

This sequence belongs to the LipB family.

The protein resides in the cytoplasm. The enzyme catalyses octanoyl-[ACP] + L-lysyl-[protein] = N(6)-octanoyl-L-lysyl-[protein] + holo-[ACP] + H(+). It functions in the pathway protein modification; protein lipoylation via endogenous pathway; protein N(6)-(lipoyl)lysine from octanoyl-[acyl-carrier-protein]: step 1/2. Catalyzes the transfer of endogenously produced octanoic acid from octanoyl-acyl-carrier-protein onto the lipoyl domains of lipoate-dependent enzymes. Lipoyl-ACP can also act as a substrate although octanoyl-ACP is likely to be the physiological substrate. This Leifsonia xyli subsp. xyli (strain CTCB07) protein is Octanoyltransferase.